The primary structure comprises 295 residues: Glutamyl-Q tRNA(Asp) synthetase (295 aa).

Residues 5–9 (RFAPS) and Glu-41 each bind L-glutamate. The 'HIGH' region motif lies at 8–18 (PSPTGLLHIGS). The Zn(2+) site is built by Cys-97, Cys-99, Tyr-117, and Cys-121. Positions 178 and 196 each coordinate L-glutamate. The 'KMSKS' region motif lies at 234-238 (KWSKQ). An ATP-binding site is contributed by Lys-237.

Belongs to the class-I aminoacyl-tRNA synthetase family. GluQ subfamily. Requires Zn(2+) as cofactor.

In terms of biological role, catalyzes the tRNA-independent activation of glutamate in presence of ATP and the subsequent transfer of glutamate onto a tRNA(Asp). Glutamate is transferred on the 2-amino-5-(4,5-dihydroxy-2-cyclopenten-1-yl) moiety of the queuosine in the wobble position of the QUC anticodon. In Neisseria meningitidis serogroup A / serotype 4A (strain DSM 15465 / Z2491), this protein is Glutamyl-Q tRNA(Asp) synthetase.